The primary structure comprises 398 residues: uncharacterized protein (398 aa).

The CobW C-terminal domain occupies 235–351 (VAIVEFSARR…DIVNALNAAL (117 aa)).

This is an uncharacterized protein from Mycobacterium bovis (strain ATCC BAA-935 / AF2122/97).